A 171-amino-acid polypeptide reads, in one-letter code: Apoptosis regulator Bcl-2 homolog (171 aa).

As to quaternary structure, interacts with host BECN1; this interaction inhibits host autophagy. Interacts with host BAK1 and BAX.

It is found in the host cytoplasm. Functionally, plays a role in the protection against apoptosis mediated by cytotoxic cells during the immune response to acute and persistent viral infection. Contributes therefore to latency establishment. Plays also a role in the inhibition of host starvation-induced autophagy which ultimately contributes to the viral chronic infection. In Murid herpesvirus 4 (MuHV-4), this protein is Apoptosis regulator Bcl-2 homolog (vBCL2).